The following is a 614-amino-acid chain: Probable pectinesterase/pectinesterase inhibitor 13 (614 aa).

The helical transmembrane segment at 25-45 threads the bilayer; that stretch reads IIVGTVSLLVVVAAIVGGAFA. The segment at 55–102 is disordered; that stretch reads QQQQQQQAKNHNKSGSGNNVVKDSDKKSPSPPTPSQKAPVSAAQSVKP. N-linked (GlcNAc...) asparagine glycosylation is found at N66, N128, N197, N243, N301, N351, and N367. The interval 103–255 is pectinesterase inhibitor 13; sequence GQGDKIIQTL…QVLTSNSLAL (153 aa). Residues 301–598 are pectinesterase 13; that stretch reads NATVAKDGSG…YTVGPFLQGD (298 aa). Substrate contacts are provided by T376 and Q406. D429 acts as the Proton donor; for pectinesterase activity in catalysis. Cysteines 443 and 463 form a disulfide. Residue D450 is the Nucleophile; for pectinesterase activity of the active site. The substrate site is built by R518 and W520. N-linked (GlcNAc...) asparagine glycosylation is found at N522 and N588.

In the N-terminal section; belongs to the PMEI family. This sequence in the C-terminal section; belongs to the pectinesterase family. As to expression, expressed in flower buds.

It localises to the membrane. The catalysed reaction is [(1-&gt;4)-alpha-D-galacturonosyl methyl ester](n) + n H2O = [(1-&gt;4)-alpha-D-galacturonosyl](n) + n methanol + n H(+). Its pathway is glycan metabolism; pectin degradation; 2-dehydro-3-deoxy-D-gluconate from pectin: step 1/5. Functionally, acts in the modification of cell walls via demethylesterification of cell wall pectin. The sequence is that of Probable pectinesterase/pectinesterase inhibitor 13 (PME13) from Arabidopsis thaliana (Mouse-ear cress).